The primary structure comprises 332 residues: Fructose-bisphosphate aldolase (332 aa).

S56 serves as a coordination point for D-glyceraldehyde 3-phosphate. D93 serves as the catalytic Proton donor. Zn(2+)-binding residues include H94, D115, E147, and H191. G192 is a binding site for dihydroxyacetone phosphate. H234 lines the Zn(2+) pocket. Residues 235-237 (GAS) and 277-280 (NIDS) each bind dihydroxyacetone phosphate.

The protein belongs to the class II fructose-bisphosphate aldolase family. In terms of assembly, homodimer. Zn(2+) serves as cofactor.

It carries out the reaction beta-D-fructose 1,6-bisphosphate = D-glyceraldehyde 3-phosphate + dihydroxyacetone phosphate. Its pathway is carbohydrate degradation; glycolysis; D-glyceraldehyde 3-phosphate and glycerone phosphate from D-glucose: step 4/4. Its function is as follows. Catalyzes the aldol condensation of dihydroxyacetone phosphate (DHAP or glycerone-phosphate) with glyceraldehyde 3-phosphate (G3P) to form fructose 1,6-bisphosphate (FBP) in gluconeogenesis and the reverse reaction in glycolysis. In Treponema pallidum (strain Nichols), this protein is Fructose-bisphosphate aldolase (fba).